Reading from the N-terminus, the 258-residue chain is Type III pantothenate kinase (258 aa).

Position 6–13 (Asp-6–Val-13) interacts with ATP. Residues Tyr-100 and Gly-107–Arg-110 contribute to the substrate site. The Proton acceptor role is filled by Asp-109. Residue Asp-129 participates in K(+) binding. Residue Thr-132 participates in ATP binding. Thr-184 contacts substrate.

Belongs to the type III pantothenate kinase family. Homodimer. NH4(+) is required as a cofactor. Requires K(+) as cofactor.

The protein resides in the cytoplasm. It catalyses the reaction (R)-pantothenate + ATP = (R)-4'-phosphopantothenate + ADP + H(+). It participates in cofactor biosynthesis; coenzyme A biosynthesis; CoA from (R)-pantothenate: step 1/5. Its function is as follows. Catalyzes the phosphorylation of pantothenate (Pan), the first step in CoA biosynthesis. The polypeptide is Type III pantothenate kinase (Clostridium botulinum (strain Loch Maree / Type A3)).